A 228-amino-acid polypeptide reads, in one-letter code: Ribose-5-phosphate isomerase A (228 aa).

Substrate contacts are provided by residues 27–30, 86–89, and 100–103; these read TGTT, DGAD, and KGMG. The active-site Proton acceptor is the glutamate 109. Lysine 127 contacts substrate.

The protein belongs to the ribose 5-phosphate isomerase family. As to quaternary structure, homodimer.

The catalysed reaction is aldehydo-D-ribose 5-phosphate = D-ribulose 5-phosphate. The protein operates within carbohydrate degradation; pentose phosphate pathway; D-ribose 5-phosphate from D-ribulose 5-phosphate (non-oxidative stage): step 1/1. In terms of biological role, catalyzes the reversible conversion of ribose-5-phosphate to ribulose 5-phosphate. This Borreliella burgdorferi (strain ZS7) (Borrelia burgdorferi) protein is Ribose-5-phosphate isomerase A.